A 335-amino-acid chain; its full sequence is Succinylglutamate desuccinylase (335 aa).

Residues histidine 59, glutamate 62, and histidine 151 each contribute to the Zn(2+) site. Glutamate 215 is a catalytic residue.

The protein belongs to the AspA/AstE family. Succinylglutamate desuccinylase subfamily. It depends on Zn(2+) as a cofactor.

The catalysed reaction is N-succinyl-L-glutamate + H2O = L-glutamate + succinate. The protein operates within amino-acid degradation; L-arginine degradation via AST pathway; L-glutamate and succinate from L-arginine: step 5/5. Transforms N(2)-succinylglutamate into succinate and glutamate. The polypeptide is Succinylglutamate desuccinylase (Pseudomonas syringae pv. tomato (strain ATCC BAA-871 / DC3000)).